We begin with the raw amino-acid sequence, 1002 residues long: Eukaryotic translation initiation factor 5B (1002 aa).

Disordered stretches follow at residues 1–172 and 184–402; these read MAKK…GLAA and EEQE…NKKD. Positions 13-23 are enriched in acidic residues; that stretch reads WDEEFEEDAAQ. A compositionally biased stretch (polar residues) spans 27-37; it reads ISATPTPNPES. Over residues 47 to 57 the composition is skewed to low complexity; the sequence is EASASAEGAEA. Composition is skewed to basic and acidic residues over residues 75–111 and 120–154; these read KKVI…EQAA and QKEK…ESDK. Over residues 155 to 172 the composition is skewed to low complexity; the sequence is PSASAKKPAKKVPAGLAA. Composition is skewed to basic and acidic residues over residues 184–252 and 267–276; these read EEQE…ERRR and AKKDGEENKP. The segment covering 277–287 has biased composition (basic residues); that stretch reads KKVVYSKKKKR. Residues 297 to 306 are compositionally biased toward basic and acidic residues; the sequence is IKSDSKKDSE. Acidic residues-rich tracts occupy residues 307 to 342 and 352 to 370; these read VVPD…EETQ and DQNQ…EEEE. The span at 381-398 shows a compositional bias: low complexity; that stretch reads STPAATPAATPTPSSASP. The region spanning 403–621 is the tr-type G domain; it reads LRSPICCILG…LLELTQKRMS (219 aa). Phosphoserine is present on Ser-405. A G1 region spans residues 412–419; the sequence is GHVDTGKT. Asp-415 contacts K(+). Asp-415 contributes to the Na(+) binding site. GTP contacts are provided by residues 415–420, Gln-431, and 437–439; these read DTGKTK and GIT. Thr-419 provides a ligand contact to Mg(2+). Gly-437 is a binding site for K(+). Gly-437 lines the Na(+) pocket. Residues 437 to 441 are G2; that stretch reads GITQQ. Residue Thr-439 coordinates Mg(2+). The segment at 476-479 is G3; sequence DTPG. Residues 530–533 and 599–600 each bind GTP; these read NKID and AV. Positions 530 to 533 are G4; it reads NKID. Residues 598-600 form a G5 region; sequence SAV.

This sequence belongs to the TRAFAC class translation factor GTPase superfamily. Classic translation factor GTPase family. IF-2 subfamily. Na(+) serves as cofactor. K(+) is required as a cofactor.

The protein localises to the cytoplasm. It catalyses the reaction GTP + H2O = GDP + phosphate + H(+). Its function is as follows. Plays a role in translation initiation. Translational GTPase that catalyzes the joining of the 40S and 60S subunits to form the 80S initiation complex with the initiator methionine-tRNA in the P-site base paired to the start codon. GTP binding and hydrolysis induces conformational changes in the enzyme that renders it active for productive interactions with the ribosome. The release of the enzyme after formation of the initiation complex is a prerequisite to form elongation-competent ribosomes. Stimulates 20S pre-rRNA cleavage to mature 18S rRNA by PIN-domain endonuclease NOB1. This chain is Eukaryotic translation initiation factor 5B, found in Saccharomyces cerevisiae (strain ATCC 204508 / S288c) (Baker's yeast).